Consider the following 161-residue polypeptide: MAVTLHTDVGDIKIELFCERTPKTCENFLALCASNYYNGCVFHRNIKGFMVQTGDPLGTGKGGTSIWGKKFEDEFSEYLKHSVRGVVSMANNGPNTNGSQFFITYGKQPHLDMKYTVFGKVIDGLETLDELEKLPVNEKTYRPLNDVHIKDITIHANPFAL.

The PPIase cyclophilin-type domain occupies 1 to 154; the sequence is MAVTLHTDVG…NDVHIKDITI (154 aa).

Belongs to the cyclophilin-type PPIase family. PPIL3 subfamily.

The catalysed reaction is [protein]-peptidylproline (omega=180) = [protein]-peptidylproline (omega=0). In terms of biological role, PPIases accelerate the folding of proteins. It catalyzes the cis-trans isomerization of proline imidic peptide bonds in oligopeptides. In Gallus gallus (Chicken), this protein is Peptidyl-prolyl cis-trans isomerase-like 3 (PPIL3).